The sequence spans 210 residues: Cytochrome c biogenesis ATP-binding export protein CcmA (210 aa).

The ABC transporter domain occupies 4–208 (VPTLSFSKLG…GAIPAQLLEL (205 aa)). 39–46 (GANGVGKT) is an ATP binding site.

This sequence belongs to the ABC transporter superfamily. CcmA exporter (TC 3.A.1.107) family. As to quaternary structure, the complex is composed of two ATP-binding proteins (CcmA) and two transmembrane proteins (CcmB).

The protein localises to the cell inner membrane. It catalyses the reaction heme b(in) + ATP + H2O = heme b(out) + ADP + phosphate + H(+). Part of the ABC transporter complex CcmAB involved in the biogenesis of c-type cytochromes; once thought to export heme, this seems not to be the case, but its exact role is uncertain. Responsible for energy coupling to the transport system. The chain is Cytochrome c biogenesis ATP-binding export protein CcmA from Albidiferax ferrireducens (strain ATCC BAA-621 / DSM 15236 / T118) (Rhodoferax ferrireducens).